The following is a 132-amino-acid chain: Minor structural pilin EpdB (132 aa).

Residues 1–4 constitute a propeptide that is removed on maturation; that stretch reads MSKG. The QXSXEXXXL signature appears at 9–19; it reads EFIVLFLALLV.

The N-terminus is probably cleaved by the prepilin peptidase EppA, which recognizes the class III signal sequence.

The protein resides in the secreted. It localises to the cell surface. It is found in the fimbrium. Its function is as follows. Minor component of the type IV-like pili. Essential for pili formation. The sequence is that of Minor structural pilin EpdB from Methanococcus maripaludis (strain DSM 14266 / JCM 13030 / NBRC 101832 / S2 / LL).